Consider the following 692-residue polypeptide: Elongation factor G (692 aa).

The 275-residue stretch at 8–282 (ENTRNIGIMA…AVIDYLPSPL (275 aa)) folds into the tr-type G domain. Residues 17–24 (AHIDAGKT), 81–85 (DTPGH), and 135–138 (NKMD) each bind GTP.

It belongs to the TRAFAC class translation factor GTPase superfamily. Classic translation factor GTPase family. EF-G/EF-2 subfamily.

It is found in the cytoplasm. Catalyzes the GTP-dependent ribosomal translocation step during translation elongation. During this step, the ribosome changes from the pre-translocational (PRE) to the post-translocational (POST) state as the newly formed A-site-bound peptidyl-tRNA and P-site-bound deacylated tRNA move to the P and E sites, respectively. Catalyzes the coordinated movement of the two tRNA molecules, the mRNA and conformational changes in the ribosome. The protein is Elongation factor G of Bacillus thuringiensis subsp. konkukian (strain 97-27).